The primary structure comprises 547 residues: Sodium-coupled neutral amino acid transporter 4 (547 aa).

The Extracellular portion of the chain corresponds to methionine 1 to glycine 104. Phosphoserine is present on serine 49. A helical transmembrane segment spans residues isoleucine 105 to leucine 125. Over leucine 126–lysine 151 the chain is Cytoplasmic. A helical transmembrane segment spans residues isoleucine 152–isoleucine 172. Residues isoleucine 173 to tyrosine 195 lie on the Extracellular side of the membrane. A helical membrane pass occupies residues leucine 196–leucine 216. The Cytoplasmic portion of the chain corresponds to lysine 217–glycine 220. The chain crosses the membrane as a helical span at residues tyrosine 221–isoleucine 241. Topologically, residues tyrosine 242–threonine 332 are extracellular. Residues cysteine 249 and cysteine 321 are joined by a disulfide bond. Asparagine 260, asparagine 264, and asparagine 276 each carry an N-linked (GlcNAc...) asparagine glycan. Residues alanine 333–tyrosine 353 traverse the membrane as a helical segment. Residues serine 354–asparagine 369 are Cytoplasmic-facing. Residues isoleucine 370–phenylalanine 390 traverse the membrane as a helical segment. The Extracellular portion of the chain corresponds to tyrosine 391–alanine 411. Residues leucine 412–phenylalanine 432 traverse the membrane as a helical segment. Over proline 433–histidine 453 the chain is Cytoplasmic. A helical membrane pass occupies residues phenylalanine 454–isoleucine 474. Over lysine 475–tyrosine 476 the chain is Extracellular. The chain crosses the membrane as a helical span at residues isoleucine 477–phenylalanine 497. Topologically, residues tyrosine 498–glycine 514 are cytoplasmic. A helical membrane pass occupies residues alanine 515–isoleucine 535. At aspartate 536–histidine 547 the chain is on the extracellular side.

Belongs to the amino acid/polyamine transporter 2 family. In terms of processing, the disulfide bond plays an important role in substrate transport, but has no effect on trafficking to the cell surface. In terms of tissue distribution, expressed predominantly in liver, and at lower level in skeletal muscle.

It localises to the cell membrane. Its subcellular location is the cell projection. It is found in the microvillus membrane. It carries out the reaction L-alanine(in) + Na(+)(in) = L-alanine(out) + Na(+)(out). The catalysed reaction is L-serine(in) + Na(+)(in) = L-serine(out) + Na(+)(out). The enzyme catalyses glycine(in) + Na(+)(in) = glycine(out) + Na(+)(out). It catalyses the reaction L-cysteine(in) + Na(+)(in) = L-cysteine(out) + Na(+)(out). It carries out the reaction L-asparagine(in) + Na(+)(in) = L-asparagine(out) + Na(+)(out). The catalysed reaction is L-threonine(in) + Na(+)(in) = L-threonine(out) + Na(+)(out). The enzyme catalyses L-proline(in) + Na(+)(in) = L-proline(out) + Na(+)(out). It catalyses the reaction L-methionine(in) + Na(+)(in) = L-methionine(out) + Na(+)(out). It carries out the reaction L-glutamine(in) + Na(+)(in) = L-glutamine(out) + Na(+)(out). The catalysed reaction is L-histidine(in) + Na(+)(in) = L-histidine(out) + Na(+)(out). Symporter that cotransports neutral amino acids and sodium ions from the extraccellular to the intracellular side of the cell membrane. The transport is electrogenic, pH dependent and partially tolerates substitution of Na(+) by Li(+). Preferentially transports smaller amino acids, such as glycine, L-alanine, L-serine, L-asparagine and L-threonine, followed by L-cysteine, L-histidine, L-proline and L-glutamine and L-methionine. The sequence is that of Sodium-coupled neutral amino acid transporter 4 from Rattus norvegicus (Rat).